The chain runs to 253 residues: Retinoic acid early-inducible protein 1-gamma (253 aa).

The N-terminal stretch at M1–G28 is a signal peptide. An intrachain disulfide couples C37 to C56. N38, N70, N83, N143, and N156 each carry an N-linked (GlcNAc...) asparagine glycan. A disulfide bridge connects residues C90 and C190. Residues L198 to T230 are disordered. A compositionally biased stretch (low complexity) spans S211–S221. The GPI-anchor amidated serine moiety is linked to residue S227. Positions H228 to M253 are cleaved as a propeptide — removed in mature form.

It belongs to the NKG2D ligand family. Glycosylated. Expressed predominantly in embryonic brain.

The protein resides in the cell membrane. Acts as a ligand for KLRK1. This chain is Retinoic acid early-inducible protein 1-gamma (Raet1c), found in Mus musculus (Mouse).